Reading from the N-terminus, the 131-residue chain is Large-conductance mechanosensitive channel (131 aa).

3 helical membrane passes run 8-28 (FAIRGNVIDLAVGVIIGGAFG), 30-50 (IVSSLVNDIIMPLVGLLLGGI), and 67-87 (GAFIQTVVDFLIIAFSIFLFV).

The protein belongs to the MscL family. In terms of assembly, homopentamer.

Its subcellular location is the cell membrane. Channel that opens in response to stretch forces in the membrane lipid bilayer. May participate in the regulation of osmotic pressure changes within the cell. The polypeptide is Large-conductance mechanosensitive channel (Geobacillus thermodenitrificans (strain NG80-2)).